The sequence spans 129 residues: UPF0344 protein USA300HOU_0928 (129 aa).

Transmembrane regions (helical) follow at residues 1–21, 36–56, 67–87, and 99–119; these read MLHL…ATYL, LHMI…WILI, MLLT…EVSI, and MFWI…ILPL.

This sequence belongs to the UPF0344 family.

It is found in the cell membrane. This is UPF0344 protein USA300HOU_0928 from Staphylococcus aureus (strain USA300 / TCH1516).